Here is a 247-residue protein sequence, read N- to C-terminus: Uridylate kinase (247 aa).

18 to 21 serves as a coordination point for ATP; sequence KLSG. Gly60 is a binding site for UMP. Gly61 and Arg65 together coordinate ATP. UMP contacts are provided by residues Asp80 and 141–148; that span reads TGNPFFTT. Positions 168, 174, and 177 each coordinate ATP.

The protein belongs to the UMP kinase family. Homohexamer.

It is found in the cytoplasm. It carries out the reaction UMP + ATP = UDP + ADP. Its pathway is pyrimidine metabolism; CTP biosynthesis via de novo pathway; UDP from UMP (UMPK route): step 1/1. With respect to regulation, inhibited by UTP. Functionally, catalyzes the reversible phosphorylation of UMP to UDP. The chain is Uridylate kinase from Stutzerimonas stutzeri (strain A1501) (Pseudomonas stutzeri).